A 416-amino-acid chain; its full sequence is Glutamyl-tRNA reductase (416 aa).

Residues 49–52 (TCNR), S105, 110–112 (EPQ), and Q116 contribute to the substrate site. The Nucleophile role is filled by C50. NADP(+) is bound at residue 185–190 (GAGETI).

It belongs to the glutamyl-tRNA reductase family. As to quaternary structure, homodimer.

The catalysed reaction is (S)-4-amino-5-oxopentanoate + tRNA(Glu) + NADP(+) = L-glutamyl-tRNA(Glu) + NADPH + H(+). It functions in the pathway porphyrin-containing compound metabolism; protoporphyrin-IX biosynthesis; 5-aminolevulinate from L-glutamyl-tRNA(Glu): step 1/2. Its function is as follows. Catalyzes the NADPH-dependent reduction of glutamyl-tRNA(Glu) to glutamate 1-semialdehyde (GSA). The protein is Glutamyl-tRNA reductase of Shewanella amazonensis (strain ATCC BAA-1098 / SB2B).